The chain runs to 128 residues: Probable 4-amino-4-deoxy-L-arabinose-phosphoundecaprenol flippase subunit ArnF (128 aa).

The Cytoplasmic segment spans residues 1–2 (MG). A helical transmembrane segment spans residues 3–23 (LMWGLFSVIIASVAQLSLGFA). The Periplasmic segment spans residues 24 to 35 (ASHLPPMTHLWD). Residues 36–56 (FIAALLAFGLDARILLLGLLG) form a helical membrane-spanning segment. Residues 57–76 (YLLSVFCWYKTLHKLALSKA) lie on the Cytoplasmic side of the membrane. Residues 77–97 (YALLSMSYVLVWIASMVLPGW) traverse the membrane as a helical segment. The Periplasmic segment spans residues 98-100 (EGT). A helical transmembrane segment spans residues 101-121 (FSLKALLGVACIMSGLMLIFL). Residues 122-128 (PMTKQRY) are Cytoplasmic-facing.

It belongs to the ArnF family. In terms of assembly, heterodimer of ArnE and ArnF.

Its subcellular location is the cell inner membrane. It functions in the pathway bacterial outer membrane biogenesis; lipopolysaccharide biosynthesis. Its function is as follows. Translocates 4-amino-4-deoxy-L-arabinose-phosphoundecaprenol (alpha-L-Ara4N-phosphoundecaprenol) from the cytoplasmic to the periplasmic side of the inner membrane. In Escherichia coli (strain 55989 / EAEC), this protein is Probable 4-amino-4-deoxy-L-arabinose-phosphoundecaprenol flippase subunit ArnF.